A 609-amino-acid chain; its full sequence is D-apionate lactonase (609 aa).

The enzyme catalyses D-apionolactone + H2O = D-apionate + H(+). It participates in carbohydrate metabolism. In terms of biological role, involved in catabolism of D-apiose. Hydrolyzes D-apionolactone to D-apionate. In Brucella anthropi (strain ATCC 49188 / DSM 6882 / CCUG 24695 / JCM 21032 / LMG 3331 / NBRC 15819 / NCTC 12168 / Alc 37) (Ochrobactrum anthropi), this protein is D-apionate lactonase.